Here is a 541-residue protein sequence, read N- to C-terminus: 2-succinyl-5-enolpyruvyl-6-hydroxy-3-cyclohexene-1-carboxylate synthase (541 aa).

It belongs to the TPP enzyme family. MenD subfamily. In terms of assembly, homodimer. It depends on Mg(2+) as a cofactor. Mn(2+) is required as a cofactor. Requires thiamine diphosphate as cofactor.

It catalyses the reaction isochorismate + 2-oxoglutarate + H(+) = 5-enolpyruvoyl-6-hydroxy-2-succinyl-cyclohex-3-ene-1-carboxylate + CO2. The protein operates within quinol/quinone metabolism; 1,4-dihydroxy-2-naphthoate biosynthesis; 1,4-dihydroxy-2-naphthoate from chorismate: step 2/7. It functions in the pathway quinol/quinone metabolism; menaquinone biosynthesis. Functionally, catalyzes the thiamine diphosphate-dependent decarboxylation of 2-oxoglutarate and the subsequent addition of the resulting succinic semialdehyde-thiamine pyrophosphate anion to isochorismate to yield 2-succinyl-5-enolpyruvyl-6-hydroxy-3-cyclohexene-1-carboxylate (SEPHCHC). The polypeptide is 2-succinyl-5-enolpyruvyl-6-hydroxy-3-cyclohexene-1-carboxylate synthase (Leuconostoc citreum (strain KM20)).